The following is a 348-amino-acid chain: Calcium homeostasis modulator protein 1 (348 aa).

The Cytoplasmic portion of the chain corresponds to 1-20 (MDKFRMIFQFLQSNQESFMN). The interval 9 to 36 (QFLQSNQESFMNGICGIMALASAQMYSA) is central pore. A helical membrane pass occupies residues 21 to 36 (GICGIMALASAQMYSA). Over 37–48 (FDFNCPCLPGYN) the chain is Extracellular. 2 disulfide bridges follow: cysteine 41/cysteine 126 and cysteine 43/cysteine 160. The chain crosses the membrane as a helical span at residues 49-71 (VVYSLGILLTPPLVLFLLGLVMN). The phospholipid-binding stretch occupies residues 62–69 (VLFLLGLV). Residues 72 to 98 (NNISMLAEEWKRPAGRRAKDPAVLRYM) are Cytoplasmic-facing. Residues 99-124 (FCSMAQRALIAPVVWVAVTLLDGKCF) traverse the membrane as a helical segment. Cysteine 100 carries S-palmitoyl cysteine lipidation. The phospholipid-binding stretch occupies residues 104-116 (QRALIAPVVWVAV). The Extracellular portion of the chain corresponds to 125-179 (LCAFCTAVPVATLGNGSLVPGLPAPELARLLARVPCPEIYDGNWLLAREVAVRYL). An N-linked (GlcNAc...) asparagine glycan is attached at asparagine 139. The chain crosses the membrane as a helical span at residues 180–205 (RCISQALGWSFVLLTTLLAFVVRSVR). The segment at 191–201 (VLLTTLLAFVV) is phospholipid-binding. The Cytoplasmic portion of the chain corresponds to 206-348 (PCFTQVAFLK…KEVATYFSKV (143 aa)). Cysteine 207 carries S-palmitoyl cysteine lipidation. The segment at 324-348 (LMSNGWAGGEPRPPRKEVATYFSKV) is disordered.

It belongs to the CALHM family. In terms of assembly, oligomerizes to form hexamers and octamers. Does not form gap junctions. Associates with CALHM3 as a pore-forming subunit in a hetero-hexameric channel complex. Post-translationally, N-glycosylated. Assembly with CALHM3 is associated with N-glycan remodeling and formation of hybrid complex- and high mannose-type glycochains. This N-glycan processing regulates channel trafficking and gating kinetics. In terms of processing, palmitoylated by ZDHHC3, ZDHHC20 and possibly ZDHHC7. Palmitoylation regulates voltage-dependent gating of the channel by shifting it toward more depolarized potentials. Specifically expressed in type II taste bud cells (at protein level). Not expressed in brain.

It is found in the cell membrane. The protein resides in the endoplasmic reticulum membrane. The protein localises to the basolateral cell membrane. The enzyme catalyses ATP(in) = ATP(out). The catalysed reaction is Ca(2+)(in) = Ca(2+)(out). It catalyses the reaction Mg(2+)(in) = Mg(2+)(out). It carries out the reaction Na(+)(in) = Na(+)(out). The enzyme catalyses K(+)(in) = K(+)(out). The catalysed reaction is Li(+)(in) = Li(+)(out). It catalyses the reaction Rb(+)(in) = Rb(+)(out). It carries out the reaction Cs(+)(in) = Cs(+)(out). The enzyme catalyses chloride(in) = chloride(out). Regulated by membrane voltage and extracellular Ca(2+). Inhibited by Gd(3+), ruthenium red, and Zn(2+) and partially inhibited by 2-aminoethoxydiphenyl borate. Pore-forming subunit of gustatory voltage-gated ion channels required for sensory perception of sweet, bitter and umami tastes. With CALHM3 forms a fast-activating voltage-gated ATP-release channel in type II taste bud cells, ATP acting as a neurotransmitter to activate afferent neural gustatory pathways. Acts both as a voltage-gated and calcium-activated ion channel: mediates neuronal excitability in response to membrane depolarization and low extracellular Ca(2+) concentration. Has poor ion selectivity and forms a wide pore (around 14 Angstroms) that mediates permeation of small ions including Ca(2+), Na(+), K(+) and Cl(-), as well as larger ions such as ATP(4-). Mediates Ca(2+) influx and downstream activation of the ERK1 and ERK2 cascade in neurons. Triggers endoplasmic reticulum stress by reducing the calcium content of the endoplasmic reticulum. May indirectly control amyloid precursor protein (APP) proteolysis and aggregated amyloid-beta (Abeta) peptides levels in a Ca(2+) dependent manner. The polypeptide is Calcium homeostasis modulator protein 1 (Mus musculus (Mouse)).